The primary structure comprises 1035 residues: Probable LRR receptor-like serine/threonine-protein kinase At1g53440 (1035 aa).

An N-terminal signal peptide occupies residues 1-26; it reads MGFFFSTRKGLLLIIFICLDIFGSNA. Residues 27-607 are Extracellular-facing; the sequence is QLLPEDEVQT…VDTGKPLSNG (581 aa). 4 N-linked (GlcNAc...) asparagine glycosylation sites follow: Asn46, Asn75, Asn83, and Asn110. 7 LRR repeats span residues 87–110, 111–135, 137–158, 160–182, 183–206, 208–232, and 234–254; these read VCRVTNIQLRGFNLRGIIPPEFGN, LTRLTEIDLVLNFLSGTIPTTLSQI, LEILAVTGNRLSGPFPPQLGQI, TLTDVIMESNLFTGQLPPNLGNL, RSLKRLLISSNNITGRIPESLSNL, NLTNFRIDGNSLSGKIPDFIGNWTR, and VRLDLQGTSMEGPIPASISNL. Residues Asn194, Asn208, and Asn229 are each glycosylated (N-linked (GlcNAc...) asparagine). 2 N-linked (GlcNAc...) asparagine glycosylation sites follow: Asn256 and Asn277. LRR repeat units follow at residues 278–302, 303–326, 328–349, and 350–372; these read MTNMERLVLRNCLIREPIPEYIGTS, MTMLKLLDLSSNMLNGTIPDTFRS, NAFNFMYLNNNSLTGPVPQFIL, and DSKQNIDLSYNNFTQPPTLSCNQ. 6 N-linked (GlcNAc...) asparagine glycosylation sites follow: Asn317, Asn337, Asn361, Asn386, Asn469, and Asn559. A helical transmembrane segment spans residues 608 to 628; sequence VVAGIVIAACVAFGLLVLVIL. At 629–1035 the chain is on the cytoplasmic side; that stretch reads RLTGYLGGKE…LDDLTDVEIE (407 aa). Residue Thr656 is modified to Phosphothreonine. A Protein kinase domain is found at 667-948; sequence FDPENKIGEG…QGKIKVQPPL (282 aa). ATP is bound by residues 673 to 681 and Lys695; that span reads IGEGGFGPV. Tyr740 carries the post-translational modification Phosphotyrosine. The active-site Proton acceptor is the Asp793. Phosphoserine is present on Ser826. Thr827 and Thr832 each carry phosphothreonine. The residue at position 840 (Tyr840) is a Phosphotyrosine. A disordered region spans residues 969–1035; the sequence is LSQDSESQVS…LDDLTDVEIE (67 aa). Over residues 972-981 the composition is skewed to polar residues; the sequence is DSESQVSTYT. Over residues 1009–1023 the composition is skewed to low complexity; that stretch reads SLLQQEEGNSSSSSR.

The protein belongs to the protein kinase superfamily. Ser/Thr protein kinase family.

Its subcellular location is the cell membrane. The catalysed reaction is L-seryl-[protein] + ATP = O-phospho-L-seryl-[protein] + ADP + H(+). It catalyses the reaction L-threonyl-[protein] + ATP = O-phospho-L-threonyl-[protein] + ADP + H(+). This chain is Probable LRR receptor-like serine/threonine-protein kinase At1g53440, found in Arabidopsis thaliana (Mouse-ear cress).